Consider the following 146-residue polypeptide: Hut operon positive regulatory protein (146 aa).

It belongs to the HutP family. In terms of assembly, homohexamer.

Functionally, antiterminator that binds to cis-acting regulatory sequences on the mRNA in the presence of histidine, thereby suppressing transcription termination and activating the hut operon for histidine utilization. The chain is Hut operon positive regulatory protein from Bacillus anthracis (strain CDC 684 / NRRL 3495).